A 506-amino-acid chain; its full sequence is Maturase K (506 aa).

It belongs to the intron maturase 2 family. MatK subfamily.

The protein resides in the plastid. It is found in the chloroplast. Functionally, usually encoded in the trnK tRNA gene intron. Probably assists in splicing its own and other chloroplast group II introns. This Crataegus monogyna (Hawthorn) protein is Maturase K.